Reading from the N-terminus, the 157-residue chain is Stalk-specific protein B (157 aa).

Positions 1-19 (MRSILILLSLLLTIAFASA) are cleaved as a signal peptide.

The protein resides in the secreted. This chain is Stalk-specific protein B (staB), found in Dictyostelium discoideum (Social amoeba).